Here is a 459-residue protein sequence, read N- to C-terminus: DnaJ protein homolog XDJ1 (459 aa).

A J domain is found at 7-79 (GDRLYDVLGV…KSHYDLYGDD (73 aa)). The segment at 146–240 (GKKLKFDLKR…CAGLGLLSKK (95 aa)) adopts a CR-type zinc-finger fold. CXXCXGXG motif repeat units follow at residues 159–166 (CIKCHGSG), 181–188 (CESCAGKG), 208–215 (CEKCNGKG), and 228–235 (CPDCAGLG).

It localises to the mitochondrion outer membrane. In Saccharomyces cerevisiae (strain ATCC 204508 / S288c) (Baker's yeast), this protein is DnaJ protein homolog XDJ1 (XDJ1).